The chain runs to 1417 residues: DNA-directed RNA polymerase subunit beta' (1417 aa).

4 residues coordinate Zn(2+): Cys68, Cys70, Cys83, and Cys86. Mg(2+) is bound by residues Asp458, Asp460, and Asp462. Zn(2+) contacts are provided by Cys811, Cys884, Cys891, and Cys894.

It belongs to the RNA polymerase beta' chain family. In terms of assembly, the RNAP catalytic core consists of 2 alpha, 1 beta, 1 beta' and 1 omega subunit. When a sigma factor is associated with the core the holoenzyme is formed, which can initiate transcription. The cofactor is Mg(2+). Zn(2+) is required as a cofactor.

The enzyme catalyses RNA(n) + a ribonucleoside 5'-triphosphate = RNA(n+1) + diphosphate. Functionally, DNA-dependent RNA polymerase catalyzes the transcription of DNA into RNA using the four ribonucleoside triphosphates as substrates. The chain is DNA-directed RNA polymerase subunit beta' from Francisella tularensis subsp. tularensis (strain FSC 198).